The primary structure comprises 251 residues: Seminal metalloprotease 1 (251 aa).

The first 18 residues, 1-18, serve as a signal peptide directing secretion; the sequence is MFPQIWGVIFLFTPTVFS. A Peptidase M12A domain is found at 44–248; it reads NGIVNQIYHW…RKLNKMYRCP (205 aa). Residues Asn55 and Asn120 are each glycosylated (N-linked (GlcNAc...) asparagine). 2 disulfide bridges follow: Cys87–Cys247 and Cys111–Cys136. His144 serves as a coordination point for Zn(2+). The active site involves Glu145. Zn(2+) is bound by residues His148 and His154. N-linked (GlcNAc...) asparagine glycosylation occurs at Asn185.

It depends on Zn(2+) as a cofactor. Post-translationally, undergoes cleavage in the male during mating with a cleaved product detected in the ejaculatory duct and/or bulb of males by 8-10 minutes after the start of mating. Further cleavage occurs in the mated female. May undergo cleavage in a two-step process where it is first cleaved by Sems, making it susceptible to activational cleavage which may be carried out by another protease or by autocleavage. Produced in the male accessory glands and secreted into seminal fluid. In mated females, confined to the reproductive tract and also detected in eggs laid by mated females (at protein level).

The protein localises to the secreted. Functionally, seminal fluid metalloprotease which is transferred to females during mating and is required for processing of two other seminal fluid proteins Acp26Aa and Acp36DE in mated females. The protein is Seminal metalloprotease 1 of Drosophila melanogaster (Fruit fly).